We begin with the raw amino-acid sequence, 290 residues long: Acetyl-coenzyme A carboxylase carboxyl transferase subunit beta (290 aa).

Positions 27–290 constitute a CoA carboxyltransferase N-terminal domain; it reads LWHKCPSCEA…FTHSPSPVSA (264 aa). 4 residues coordinate Zn(2+): C31, C34, C50, and C53. The C4-type zinc finger occupies 31–53; the sequence is CPSCEAVLYRPELEKTLDVCPKC.

Belongs to the AccD/PCCB family. Acetyl-CoA carboxylase is a heterohexamer composed of biotin carboxyl carrier protein (AccB), biotin carboxylase (AccC) and two subunits each of ACCase subunit alpha (AccA) and ACCase subunit beta (AccD). The cofactor is Zn(2+).

The protein localises to the cytoplasm. The enzyme catalyses N(6)-carboxybiotinyl-L-lysyl-[protein] + acetyl-CoA = N(6)-biotinyl-L-lysyl-[protein] + malonyl-CoA. It participates in lipid metabolism; malonyl-CoA biosynthesis; malonyl-CoA from acetyl-CoA: step 1/1. Component of the acetyl coenzyme A carboxylase (ACC) complex. Biotin carboxylase (BC) catalyzes the carboxylation of biotin on its carrier protein (BCCP) and then the CO(2) group is transferred by the transcarboxylase to acetyl-CoA to form malonyl-CoA. The polypeptide is Acetyl-coenzyme A carboxylase carboxyl transferase subunit beta (Pseudomonas paraeruginosa (strain DSM 24068 / PA7) (Pseudomonas aeruginosa (strain PA7))).